The primary structure comprises 388 residues: Succinate--CoA ligase [ADP-forming] subunit beta (388 aa).

An ATP-grasp domain is found at 9–244 (KQLFARYGLP…QSQEDPREAQ (236 aa)). Residues K46, 53 to 55 (GRG), E99, T102, and E107 each bind ATP. Mg(2+) contacts are provided by N199 and D213. Substrate is bound by residues N264 and 321–323 (GIV).

The protein belongs to the succinate/malate CoA ligase beta subunit family. In terms of assembly, heterotetramer of two alpha and two beta subunits. The cofactor is Mg(2+).

It carries out the reaction succinate + ATP + CoA = succinyl-CoA + ADP + phosphate. It catalyses the reaction GTP + succinate + CoA = succinyl-CoA + GDP + phosphate. The protein operates within carbohydrate metabolism; tricarboxylic acid cycle; succinate from succinyl-CoA (ligase route): step 1/1. Its function is as follows. Succinyl-CoA synthetase functions in the citric acid cycle (TCA), coupling the hydrolysis of succinyl-CoA to the synthesis of either ATP or GTP and thus represents the only step of substrate-level phosphorylation in the TCA. The beta subunit provides nucleotide specificity of the enzyme and binds the substrate succinate, while the binding sites for coenzyme A and phosphate are found in the alpha subunit. The polypeptide is Succinate--CoA ligase [ADP-forming] subunit beta (Salmonella arizonae (strain ATCC BAA-731 / CDC346-86 / RSK2980)).